The following is a 214-amino-acid chain: Probable GTP-binding protein EngB (214 aa).

The region spanning 31 to 214 is the EngB-type G domain; the sequence is GPPEIAFAGR…LRAAILQTIA (184 aa). GTP contacts are provided by residues 39-46, 66-70, 93-96, 160-163, and 194-196; these read GRSNVGKS, GRTQE, DMPG, TKSD, and TSS. Positions 46 and 68 each coordinate Mg(2+).

This sequence belongs to the TRAFAC class TrmE-Era-EngA-EngB-Septin-like GTPase superfamily. EngB GTPase family. It depends on Mg(2+) as a cofactor.

Functionally, necessary for normal cell division and for the maintenance of normal septation. This chain is Probable GTP-binding protein EngB, found in Bartonella tribocorum (strain CIP 105476 / IBS 506).